Reading from the N-terminus, the 308-residue chain is uncharacterized protein (308 aa).

Residue Glu-59 is part of the active site.

Belongs to the PhzF family.

This is an uncharacterized protein from Deinococcus radiodurans (strain ATCC 13939 / DSM 20539 / JCM 16871 / CCUG 27074 / LMG 4051 / NBRC 15346 / NCIMB 9279 / VKM B-1422 / R1).